The following is a 331-amino-acid chain: Aromatic 2-oxoacid reductase (331 aa).

NAD(+)-binding positions include 154–155 (RI), Asp-175, 205–206 (AP), Asn-211, 232–234 (AAR), and Asp-258. Arg-234 is a catalytic residue. The active site involves Glu-263. The Proton donor role is filled by His-295.

The protein belongs to the D-isomer specific 2-hydroxyacid dehydrogenase family.

The catalysed reaction is (R)-3-phenyllactate + NAD(+) = 3-phenylpyruvate + NADH + H(+). It catalyses the reaction (2R)-2-hydroxy-3-(4-hydroxyphenyl)propanoate + NAD(+) = 3-(4-hydroxyphenyl)pyruvate + NADH + H(+). The enzyme catalyses 3-(indol-3-yl)lactate + NAD(+) = indole-3-pyruvate + NADH + H(+). It participates in amino-acid degradation. Functionally, essential for the reductive metabolism of L-phenylalanine, L-tyrosine and L-tryptophan. Catalyzes the conversion of phenylpyruvic acid to phenyllactic acid, 4-hydroxy-phenylpyruvic acid to 4-hydroxy-phenyllactic acid, and indolepyruvic acid to indolelactic acid. The protein is Aromatic 2-oxoacid reductase of Clostridium sporogenes (strain ATCC 7955 / DSM 767 / NBRC 16411 / NCIMB 8053 / NCTC 8594 / PA 3679).